The primary structure comprises 428 residues: Adenylosuccinate synthetase (428 aa).

Residues 12–18 and 40–42 contribute to the GTP site; these read GDEGKGK and GHT. The active-site Proton acceptor is aspartate 13. Aspartate 13 and glycine 40 together coordinate Mg(2+). Residues 13–16, 38–41, threonine 128, arginine 142, glutamine 223, threonine 238, and arginine 302 contribute to the IMP site; these read DEGK and NAGH. Catalysis depends on histidine 41, which acts as the Proton donor. Residue 298-304 coordinates substrate; it reads TTTGRPR. Residues arginine 304, 330 to 332, and 412 to 414 each bind GTP; these read KLD and GVG.

This sequence belongs to the adenylosuccinate synthetase family. As to quaternary structure, homodimer. The cofactor is Mg(2+).

Its subcellular location is the cytoplasm. It catalyses the reaction IMP + L-aspartate + GTP = N(6)-(1,2-dicarboxyethyl)-AMP + GDP + phosphate + 2 H(+). Its pathway is purine metabolism; AMP biosynthesis via de novo pathway; AMP from IMP: step 1/2. Plays an important role in the de novo pathway of purine nucleotide biosynthesis. Catalyzes the first committed step in the biosynthesis of AMP from IMP. This Kineococcus radiotolerans (strain ATCC BAA-149 / DSM 14245 / SRS30216) protein is Adenylosuccinate synthetase.